Here is a 385-residue protein sequence, read N- to C-terminus: 1-deoxy-D-xylulose 5-phosphate reductoisomerase (385 aa).

NADPH is bound by residues Thr-10, Gly-11, Ser-12, Ile-13, Lys-37, and Asn-124. Residue Lys-125 coordinates 1-deoxy-D-xylulose 5-phosphate. Position 126 (Glu-126) interacts with NADPH. Position 150 (Asp-150) interacts with Mn(2+). 4 residues coordinate 1-deoxy-D-xylulose 5-phosphate: Ser-151, Glu-152, Ser-176, and His-199. Glu-152 contributes to the Mn(2+) binding site. NADPH is bound at residue Gly-205. The 1-deoxy-D-xylulose 5-phosphate site is built by Ser-212, Asn-217, Lys-218, and Glu-221. Glu-221 serves as a coordination point for Mn(2+).

This sequence belongs to the DXR family. It depends on Mg(2+) as a cofactor. Requires Mn(2+) as cofactor.

The enzyme catalyses 2-C-methyl-D-erythritol 4-phosphate + NADP(+) = 1-deoxy-D-xylulose 5-phosphate + NADPH + H(+). It participates in isoprenoid biosynthesis; isopentenyl diphosphate biosynthesis via DXP pathway; isopentenyl diphosphate from 1-deoxy-D-xylulose 5-phosphate: step 1/6. Functionally, catalyzes the NADPH-dependent rearrangement and reduction of 1-deoxy-D-xylulose-5-phosphate (DXP) to 2-C-methyl-D-erythritol 4-phosphate (MEP). In Clostridium botulinum (strain Loch Maree / Type A3), this protein is 1-deoxy-D-xylulose 5-phosphate reductoisomerase.